We begin with the raw amino-acid sequence, 100 residues long: MFAIIQTGGKQYRVQEGDVIRVENLKGEAGDKLDLTPLFVGGDQALFGDAVSNFVVNAEVVEHGRGPKIYIRKYKSGVQYRRRTGHRQDYTAIKILGIKG.

This sequence belongs to the bacterial ribosomal protein bL21 family. Part of the 50S ribosomal subunit. Contacts protein L20.

In terms of biological role, this protein binds to 23S rRNA in the presence of protein L20. The polypeptide is Large ribosomal subunit protein bL21 (Deinococcus deserti (strain DSM 17065 / CIP 109153 / LMG 22923 / VCD115)).